The following is a 548-amino-acid chain: Glutamate--tRNA ligase (548 aa).

A 'HIGH' region motif is present at residues 102–112; sequence PSPSGPLHIGH.

This sequence belongs to the class-I aminoacyl-tRNA synthetase family. Glutamate--tRNA ligase type 2 subfamily.

The protein localises to the cytoplasm. The catalysed reaction is tRNA(Glu) + L-glutamate + ATP = L-glutamyl-tRNA(Glu) + AMP + diphosphate. Catalyzes the attachment of glutamate to tRNA(Glu) in a two-step reaction: glutamate is first activated by ATP to form Glu-AMP and then transferred to the acceptor end of tRNA(Glu). The protein is Glutamate--tRNA ligase of Thermoplasma volcanium (strain ATCC 51530 / DSM 4299 / JCM 9571 / NBRC 15438 / GSS1).